Consider the following 356-residue polypeptide: CMP-sialic acid transporter 2 (356 aa).

The segment covering 1–24 (MEYRRVKDQESYDVVSQKDIESPG) has biased composition (basic and acidic residues). A disordered region spans residues 1-43 (MEYRRVKDQESYDVVSQKDIESPGERSLSSTSATSSLSTAGAS). The Cytoplasmic segment spans residues 1 to 52 (MEYRRVKDQESYDVVSQKDIESPGERSLSSTSATSSLSTAGASKGNNSWKLK). Residues 27-43 (SLSSTSATSSLSTAGAS) show a composition bias toward low complexity. Residues 53-73 (SIVTLALTLLTSSQAILIVWS) traverse the membrane as a helical segment. Over 74 to 82 (KRAGKYEYS) the chain is Lumenal. The helical transmembrane segment at 83-103 (VTTANFSVEALKCLLSLIALY) threads the bilayer. Topologically, residues 104 to 125 (RTWNSQGVTEDNRLSTSFDEVS) are cytoplasmic. The chain crosses the membrane as a helical span at residues 126-146 (VYPIPAILYMVKNLLQYYIFA). Residues 147–149 (YVD) are Lumenal-facing. Residues 150 to 172 (APAYQILKNLNIISTGVLYRIIL) form a helical membrane-spanning segment. Over 173 to 175 (KKK) the chain is Cytoplasmic. The helical transmembrane segment at 176 to 196 (LSEIQWAAFILLCAGCTTAQL) threads the bilayer. Topologically, residues 197–211 (NPSSDHVLQTPIQGW) are lumenal. Residues 212–232 (VMAIVMALLSGFAGVYTEAII) traverse the membrane as a helical segment. At 233-239 (KKRPSRN) the chain is on the cytoplasmic side. The helical transmembrane segment at 240 to 260 (INVQNFWLYIFGMLFNLVAIC) threads the bilayer. At 261 to 277 (VQDFDAVMNKGFFHGYS) the chain is on the lumenal side. A helical membrane pass occupies residues 278 to 298 (FITVLMILNHALSGIAVSMVM). At 299–314 (KYADNIVKVYSTSVAM) the chain is on the cytoplasmic side. The helical transmembrane segment at 315–335 (LLTAVVSVFLFGFHLSLAFFL) threads the bilayer. Topologically, residues 336–356 (GSTVVSVSVYLHSVGKPQPQK) are lumenal.

This sequence belongs to the nucleotide-sugar transporter family. CMP-Sialate:CMP antiporter (TC 2.A.7.12) subfamily.

Its subcellular location is the golgi apparatus membrane. In terms of biological role, sugar transporter involved in the transport of CMP-sialic acid from the cytoplasm into the Golgi. May transport important nucleotide sugars such as CMP-Kdo (2-keto-3-deoxy-D-manno-octulosonic acid) in physiological conditions. This chain is CMP-sialic acid transporter 2, found in Oryza sativa subsp. indica (Rice).